The following is a 1065-amino-acid chain: NLR family CARD domain-containing protein 3 (1065 aa).

Positions 1–10 (MRKQEVRTGR) are enriched in basic and acidic residues. The interval 1-62 (MRKQEVRTGR…PLGPCSNDSR (62 aa)) is disordered. Residues 139-460 (RVSITIGVAG…YCFTHLSLQE (322 aa)) form the NACHT domain. 145 to 152 (GVAGMGKT) is an ATP binding site. The TRAF6-binding motif lies at 457–460 (SLQE). LRR repeat units lie at residues 617–639 (EANL…LLYC), 641–663 (KLRL…VLSG), 665–688 (DCRI…ALAR), 693–716 (NRSL…ALAD), 721–744 (NRTL…SMAE), 749–772 (NRTL…RMAD), 777–800 (NRSL…ALAE), 805–828 (NQGL…ALMG), 833–856 (NQTL…AIAH), 861–884 (NSTL…AIAV), 889–912 (NRTL…ALGQ), 917–940 (NRSL…AVAR), 945–968 (NTAL…VLGE), 973–996 (NRTL…ALAN), 1001–1029 (NSSL…LSGN), and 1031–1052 (RLQH…MISE).

It belongs to the NLRP family. As to quaternary structure, directly interacts (via CARD) with TMEM173/STING; this interaction reduces TMEM173 trafficking to the perinuclear region in response to interferon stimulatory DNA. Also interacts, but to a lesser extent, with TBK1. Interacts with TRAF6; this interaction results in decreased TRAF6 'Lys-63'-linked polyubiquitination, but leaves 'Lys-48'-linked chains unchanged, promoting TRAF6 protein degradation. Interacts with PIK3R1/PIK3R2; this interaction disrupts the association between PIK3R1/PIK3R2 and the p110 catalytic subunit PIK3CA/PIK3CB/PIK3CD and reduces PIK3R1/PIK3R2 activation. Weakly interacts with PYCARD/ASC. Interacts with CASP1 and CASP5.

The protein resides in the cytoplasm. Its function is as follows. Negative regulator of the innate immune response. Attenuates signaling pathways activated by Toll-like receptors (TLRs) and the DNA sensor STING/TMEM173 in response to pathogen-associated molecular patterns, such as intracellular poly(dA:dT), but not poly(I:C), or in response to DNA virus infection, including that of Herpes simplex virus 1 (HSV1). May affect TLR4 signaling by acting at the level of TRAF6 ubiquitination, decreasing the activating 'Lys-63'-linked ubiquitination and leaving unchanged the degradative 'Lys-48'-linked ubiquitination. Inhibits the PI3K-AKT-mTOR pathway possibly by directly interacting with the posphatidylinositol 3-kinase regulatory subunit p85 (PIK3R1/PIK3R2) and disrupting the association between PIK3R1/PIK3R2 and the catalytic subunit p110 (PIK3CA/PIK3CB/PIK3CD) and reducing PIK3R1/PIK3R2 activation. Via its regulation of the PI3K-AKT-mTOR pathway, controls cell proliferation, predominantly in intestinal epithelial cells. May also affect NOD1- or NOD2-mediated NF-kappa-B activation. Might also affect the inflammatory response by preventing NLRP3 inflammasome formation, CASP1 cleavage and IL1B maturation. The protein is NLR family CARD domain-containing protein 3 (NLRC3) of Homo sapiens (Human).